The primary structure comprises 173 residues: Phosphopantetheine adenylyltransferase (173 aa).

A substrate-binding site is contributed by serine 9. ATP-binding positions include 9–10 (SF) and histidine 17. 3 residues coordinate substrate: lysine 41, threonine 73, and arginine 87. ATP is bound by residues 88-90 (GVR), glutamate 98, and 123-129 (YQYLSSS).

Belongs to the bacterial CoaD family. Homohexamer. Mg(2+) is required as a cofactor.

It localises to the cytoplasm. It catalyses the reaction (R)-4'-phosphopantetheine + ATP + H(+) = 3'-dephospho-CoA + diphosphate. It participates in cofactor biosynthesis; coenzyme A biosynthesis; CoA from (R)-pantothenate: step 4/5. Functionally, reversibly transfers an adenylyl group from ATP to 4'-phosphopantetheine, yielding dephospho-CoA (dPCoA) and pyrophosphate. The sequence is that of Phosphopantetheine adenylyltransferase from Limosilactobacillus fermentum (strain NBRC 3956 / LMG 18251) (Lactobacillus fermentum).